We begin with the raw amino-acid sequence, 149 residues long: Protein FAM72A (149 aa).

Belongs to the FAM72 family. As to quaternary structure, interacts with UNG. In terms of tissue distribution, expressed at high levels in stomach and also in kidney and, at low levels, in heart (at protein level). In the stomach, highly expressed in foveolar cells, parietal cells and chief cells (at protein level). In kidney, expressed in endothelial cells, mesangial and epithelial cells (parietal and visceral epithelium) around glomerulus (at protein level).

It is found in the cytoplasm. The protein localises to the mitochondrion. Its function is as follows. May play a role in the regulation of cellular reactive oxygen species metabolism. May participate in cell growth regulation. The chain is Protein FAM72A (Fam72a) from Rattus norvegicus (Rat).